The sequence spans 301 residues: Homoserine O-acetyltransferase (301 aa).

Cys142 acts as the Acyl-thioester intermediate in catalysis. Substrate-binding residues include Lys163 and Ser192. Catalysis depends on His235, which acts as the Proton acceptor. The active site involves Glu237. A substrate-binding site is contributed by Arg249.

Belongs to the MetA family.

It localises to the cytoplasm. The catalysed reaction is L-homoserine + acetyl-CoA = O-acetyl-L-homoserine + CoA. It participates in amino-acid biosynthesis; L-methionine biosynthesis via de novo pathway; O-acetyl-L-homoserine from L-homoserine: step 1/1. In terms of biological role, transfers an acetyl group from acetyl-CoA to L-homoserine, forming acetyl-L-homoserine. In Bacillus mycoides (strain KBAB4) (Bacillus weihenstephanensis), this protein is Homoserine O-acetyltransferase.